The following is a 450-amino-acid chain: uncharacterized protein (450 aa).

The TRAM domain occupies 1–58 (MQKNQIVDLEITDLSYEAMGVAHLDGMTVFVNNALPGEIVSAKLLKVKKNFAFAKIEK). Positions 280, 309, 330, and 378 each coordinate S-adenosyl-L-methionine. The active-site Nucleophile is Cys405.

The protein belongs to the class I-like SAM-binding methyltransferase superfamily. RNA M5U methyltransferase family.

This is an uncharacterized protein from Lactobacillus johnsonii (strain CNCM I-12250 / La1 / NCC 533).